We begin with the raw amino-acid sequence, 58 residues long: Large ribosomal subunit protein uL30 (58 aa).

Belongs to the universal ribosomal protein uL30 family. In terms of assembly, part of the 50S ribosomal subunit.

This chain is Large ribosomal subunit protein uL30, found in Zymomonas mobilis subsp. mobilis (strain ATCC 31821 / ZM4 / CP4).